Consider the following 429-residue polypeptide: Carboxypeptidase B (429 aa).

The signal sequence occupies residues 1–15 (MKFLLVLALCAVVYA). In terms of domain architecture, Peptidase M14 spans 121–423 (NYQELEVIDE…EGIVVGARRA (303 aa)). The Zn(2+) site is built by histidine 182 and glutamate 185. Substrate is bound by residues 182 to 185 (HARE), arginine 236, and 256 to 257 (NR). Residues cysteine 250 and cysteine 273 are joined by a disulfide bond. Histidine 309 serves as a coordination point for Zn(2+). Substrate is bound by residues 310 to 311 (SF) and tyrosine 365. Glutamate 387 (proton donor/acceptor) is an active-site residue.

Belongs to the peptidase M14 family. Requires Zn(2+) as cofactor.

Its subcellular location is the secreted. The catalysed reaction is Preferential release of a C-terminal lysine or arginine amino acid.. Highly resistant to inhibition by potato carboxypeptidase inhibitor (PCI). Moderately inhibited by leech carboxypeptidase inhibitor (LCI) and tick carboxypeptidase inhibitor (TCI). Its function is as follows. Metalloprotease which cleaves a single amino acid from the C-terminal end of polypeptide chains. Shows a strong preference for peptides with a terminal lysine residue. This chain is Carboxypeptidase B, found in Helicoverpa zea (Corn earworm moth).